We begin with the raw amino-acid sequence, 404 residues long: Glucose-1-phosphate adenylyltransferase (404 aa).

Alpha-D-glucose 1-phosphate is bound by residues Y99, G164, 179-180, and S197; that span reads EK.

Belongs to the bacterial/plant glucose-1-phosphate adenylyltransferase family.

It carries out the reaction alpha-D-glucose 1-phosphate + ATP + H(+) = ADP-alpha-D-glucose + diphosphate. The protein operates within capsule biogenesis; capsule polysaccharide biosynthesis. It functions in the pathway glycan biosynthesis; glycogen biosynthesis. Involved in the biosynthesis of ADP-glucose, a building block, required in the biosynthesis of maltose-1-phosphate (M1P) and in the elongation reactions to produce linear alpha-1,4-glucans. Catalyzes the reaction between ATP and alpha-D-glucose 1-phosphate (G1P) to produce pyrophosphate and ADP-Glc. The polypeptide is Glucose-1-phosphate adenylyltransferase (Mycobacterium marinum (strain ATCC BAA-535 / M)).